Reading from the N-terminus, the 253-residue chain is Complement C1q subcomponent subunit B (253 aa).

Residues 1–25 (MKTQWSEILTPLLLLLLGLLHVSWA) form the signal peptide. Q26 bears the Pyrrolidone carboxylic acid mark. In terms of domain architecture, Collagen-like spans 29–112 (CTGSPGIPGV…GPRGPKGGSG (84 aa)). Residues 29 to 114 (CTGSPGIPGV…RGPKGGSGDY (86 aa)) form a disordered region. 4-hydroxyproline occurs at positions 33, 36, 39, 51, and 54. K57 and K60 each carry 5-hydroxylysine. P63 is subject to 4-hydroxyproline. Residues 68–77 (DHGELGEKGD) are compositionally biased toward basic and acidic residues. K75 carries the post-translational modification 5-hydroxylysine. Residues 78–96 (AGIPGIPGKVGPKGPVGPK) are compositionally biased toward low complexity. 4-hydroxyproline is present on residues P81 and P84. K90 and K96 each carry 5-hydroxylysine. 4-hydroxyproline occurs at positions 99 and 102. Residue K108 is modified to 5-hydroxylysine. Positions 115–253 (KATQKVAFSA…GFLLFPDMDV (139 aa)) constitute a C1q domain. Residues C179 and C198 are joined by a disulfide bond. Ca(2+) contacts are provided by D199, Y200, and Q206.

In terms of assembly, core component of the complement C1 complex, a calcium-dependent complex composed of 1 molecule of the C1Q subcomplex, 2 molecules of C1R and 2 molecules of C1S. The C1Q subcomplex is composed 18 subunits: 3 chains of C1QA, C1QB, and C1QC trimerize to form 6 collagen-like triple helices connected to six globular ligand-recognition modules (C1q domain). In terms of processing, hydroxylated on lysine and proline residues. Hydroxylated lysine residues can be glycosylated. Human C1Q contains up to 68.3 hydroxylysine-galactosylglucose residues and up to 2.5 hydroxylysine-galactose per molecule. Total percentage hydroxylysine residues glycosylated is 86.4%. Highest levels in spleen, lung and brain. Weaker expression in kidney and liver. In the spleen, localized mainly to the red pulp, in cells mainly of monocyte-macrophage lineage. In white pulp, localized in specific dendritic cells such as those from the periarteriolar lymphatic sheath (PALS).

The protein resides in the secreted. Its subcellular location is the cell surface. Its activity is regulated as follows. The C1Q subcomplex is inhibited by sulfated molecules, such as triterpenoid sulfates, heparan sulfate, or chondroitin sulfates. Functionally, core component of the complement C1 complex, a multiprotein complex that initiates the classical pathway of the complement system, a cascade of proteins that leads to phagocytosis and breakdown of pathogens and signaling that strengthens the adaptive immune system. The classical complement pathway is initiated by the C1Q subcomplex of the C1 complex, which specifically binds IgG or IgM immunoglobulins complexed with antigens, forming antigen-antibody complexes on the surface of pathogens: C1QA, together with C1QB and C1QC, specifically recognizes and binds the Fc regions of IgG or IgM via its C1q domain. Immunoglobulin-binding activates the proenzyme C1R, which cleaves C1S, initiating the proteolytic cascade of the complement system. The C1Q subcomplex is activated by a hexamer of IgG complexed with antigens, while it is activated by a pentameric IgM. The C1Q subcomplex also recognizes and binds phosphatidylserine exposed on the surface of cells undergoing programmed cell death, possibly promoting activation of the complement system. This Rattus norvegicus (Rat) protein is Complement C1q subcomponent subunit B.